A 360-amino-acid polypeptide reads, in one-letter code: MNPTDIADTTLDESIYSNYYLYESIPKPCTKEGIKAFGELFLPPLYSLVFVFGLLGNSVVVLVLFKYKRLRSMTDVYLLNLAISDLLFVFSLPFWGYYAADQWVFGLGLCKMISWMYLVGFYSGIFFVMLMSIDRYLAIVHAVFSLRARTLTYGVITSLATWSVAVFASLPGFLFSTCYTERNHTYCKTKYSLNSTTWKVLSSLEINILGLVIPLGIMLFCYSMIIRTLQHCKNEKKNKAVKMIFAVVVLFLGFWTPYNIVLFLETLVELEVLQDCTFERYLDYAIQATETLAFVHCCLNPIIYFFLGEKFRKYILQLFKTCRGLFVLCQYCGLLQIYSADTPSSSYTQSTMDHDLHDAL.

Residues 1–39 are Extracellular-facing; that stretch reads MNPTDIADTTLDESIYSNYYLYESIPKPCTKEGIKAFGE. The chain crosses the membrane as a helical span at residues 40-67; it reads LFLPPLYSLVFVFGLLGNSVVVLVLFKY. Over 68-77 the chain is Cytoplasmic; that stretch reads KRLRSMTDVY. The chain crosses the membrane as a helical span at residues 78 to 98; that stretch reads LLNLAISDLLFVFSLPFWGYY. The Extracellular segment spans residues 99 to 111; sequence AADQWVFGLGLCK. A disulfide bridge connects residues C110 and C187. Residues 112–133 form a helical membrane-spanning segment; it reads MISWMYLVGFYSGIFFVMLMSI. Residues 134-150 are Cytoplasmic-facing; that stretch reads DRYLAIVHAVFSLRART. A helical transmembrane segment spans residues 151–175; it reads LTYGVITSLATWSVAVFASLPGFLF. Over 176 to 206 the chain is Extracellular; it reads STCYTERNHTYCKTKYSLNSTTWKVLSSLEI. N183 and N194 each carry an N-linked (GlcNAc...) asparagine glycan. The chain crosses the membrane as a helical span at residues 207-226; it reads NILGLVIPLGIMLFCYSMII. Residues 227–242 are Cytoplasmic-facing; that stretch reads RTLQHCKNEKKNKAVK. Residues 243–267 form a helical membrane-spanning segment; sequence MIFAVVVLFLGFWTPYNIVLFLETL. The Extracellular portion of the chain corresponds to 268-284; sequence VELEVLQDCTFERYLDY. The helical transmembrane segment at 285–308 threads the bilayer; the sequence is AIQATETLAFVHCCLNPIIYFFLG. At 309 to 360 the chain is on the cytoplasmic side; the sequence is EKFRKYILQLFKTCRGLFVLCQYCGLLQIYSADTPSSSYTQSTMDHDLHDAL.

This sequence belongs to the G-protein coupled receptor 1 family. In natural killer cells, CCL22 binding induces phosphorylation on yet undefined Ser/Thr residues, most probably by beta-adrenergic receptor kinases 1 and 2. As to expression, predominantly expressed in the thymus, in peripheral blood leukocytes, including T-cells, mostly CD4+ cells, and basophils, and in platelets; at lower levels, in the spleen and in monocytes. Detected also in macrophages, IL-2-activated natural killer cells and skin-homing memory T-cells, mostly the ones expressing the cutaneous lymphocyte antigen (CLA). Expressed in brain microvascular and coronary artery endothelial cells.

The protein resides in the cell membrane. Functionally, high affinity receptor for the C-C type chemokines CCL17/TARC, CCL22/MDC and CKLF isoform 1/CKLF1. The activity of this receptor is mediated by G(i) proteins which activate a phosphatidylinositol-calcium second messenger system. Can function as a chemoattractant homing receptor on circulating memory lymphocytes and as a coreceptor for some primary HIV-2 isolates. In the CNS, could mediate hippocampal-neuron survival. This is C-C chemokine receptor type 4 (CCR4) from Homo sapiens (Human).